A 1338-amino-acid polypeptide reads, in one-letter code: Centrosomal P4.1-associated protein (1338 aa).

2 disordered regions span residues 78–99 (QKLE…HTGF) and 190–211 (GLSL…TTTG). Residues Ser-260 and Ser-317 each carry the phosphoserine modification. The alpha/beta-tubulin binding stretch occupies residues 320 to 395 (VANIEERPIK…FTNAKSKFQK (76 aa)). Disordered stretches follow at residues 387 to 415 (TNAK…PLFK), 437 to 480 (PILK…QTGK), and 522 to 552 (QGKD…ESES). The segment covering 401 to 410 (LVTNQSTSED) has biased composition (polar residues). At Ser-541 the chain carries Phosphoserine. The segment covering 542 to 551 (PIRETMKESE) has biased composition (basic and acidic residues). A phosphoserine; by PLK2 mark is found at Ser-590 and Ser-596. Disordered regions lie at residues 612–790 (HRMS…LSMS), 846–903 (VKRG…DNAR), and 1088–1158 (TQVE…HPDG). Positions 636–651 (NRSEDLDHTAREKESE) are enriched in basic and acidic residues. A compositionally biased stretch (polar residues) spans 680 to 690 (QKSTSENQTEW). Positions 718-765 (STEDRERGISSREDSPQVCDDKGPFKDTRTQEDKRRDVDLDLSDKDYS) are enriched in basic and acidic residues. Ser-760 is modified (phosphoserine). Low complexity predominate over residues 781–790 (PSRSSSLSMS). The segment at 896–1338 (QPPGDNARSQ…EGNVLMDTEL (443 aa)) is interaction with STIL.

It belongs to the TCP10 family. Forms homodimers. Associates with microtubules plus ends; binds to beta-tubulin subunits exposed on microtubule outer surface at its distal tip; also associates with microtubule lattice. Associated with the gamma-tubulin complex. Interacts with the head domain of EPB41. Interacts with LYST. Interacts with CEP152 (via C-terminus). Interacts with STIL. Forms a complex with STIL and SASS6. In terms of processing, phosphorylation at Ser-590 and Ser-596 by PLK2 is required for procentriole formation and centriole elongation. Phosphorylation by PLK2 oscillates during the cell cycle: it increases at G1/S transition and decreases during the exit from mitosis. Phosphorylation at Ser-596 is also mediated by PLK4 but is not a critical step in PLK4 function in procentriole assembly.

Its subcellular location is the cytoplasm. The protein localises to the cytoskeleton. It localises to the microtubule organizing center. It is found in the centrosome. The protein resides in the centriole. Its function is as follows. Plays an important role in cell division and centrosome function by participating in centriole duplication. Inhibits microtubule nucleation from the centrosome. Involved in the regulation of slow processive growth of centriolar microtubules. Acts as microtubule plus-end tracking protein that stabilizes centriolar microtubules and inhibits microtubule polymerization and extension from the distal ends of centrioles. Required for centriole elongation and for STIL-mediated centriole amplification. Required for the recruitment of CEP295 to the proximal end of new-born centrioles at the centriolar microtubule wall during early S phase in a PLK4-dependent manner. May be involved in the control of centriolar-microtubule growth by acting as a regulator of tubulin release. This chain is Centrosomal P4.1-associated protein (CPAP), found in Pan troglodytes (Chimpanzee).